A 94-amino-acid polypeptide reads, in one-letter code: Pyrimidine/purine nucleoside phosphorylase (94 aa).

It belongs to the nucleoside phosphorylase PpnP family.

It carries out the reaction a purine D-ribonucleoside + phosphate = a purine nucleobase + alpha-D-ribose 1-phosphate. The enzyme catalyses adenosine + phosphate = alpha-D-ribose 1-phosphate + adenine. It catalyses the reaction cytidine + phosphate = cytosine + alpha-D-ribose 1-phosphate. The catalysed reaction is guanosine + phosphate = alpha-D-ribose 1-phosphate + guanine. It carries out the reaction inosine + phosphate = alpha-D-ribose 1-phosphate + hypoxanthine. The enzyme catalyses thymidine + phosphate = 2-deoxy-alpha-D-ribose 1-phosphate + thymine. It catalyses the reaction uridine + phosphate = alpha-D-ribose 1-phosphate + uracil. The catalysed reaction is xanthosine + phosphate = alpha-D-ribose 1-phosphate + xanthine. Its function is as follows. Catalyzes the phosphorolysis of diverse nucleosides, yielding D-ribose 1-phosphate and the respective free bases. Can use uridine, adenosine, guanosine, cytidine, thymidine, inosine and xanthosine as substrates. Also catalyzes the reverse reactions. This Pectobacterium carotovorum subsp. carotovorum (strain PC1) protein is Pyrimidine/purine nucleoside phosphorylase.